The chain runs to 243 residues: DNA repair protein RecO (243 aa).

This sequence belongs to the RecO family.

Involved in DNA repair and RecF pathway recombination. The polypeptide is DNA repair protein RecO (Xylella fastidiosa (strain M12)).